The sequence spans 232 residues: Flagellar L-ring protein (232 aa).

Positions 1-15 are cleaved as a signal peptide; sequence MKKVLFYVLPFAFFG. Residue cysteine 16 is the site of N-palmitoyl cysteine attachment. Cysteine 16 is lipidated: S-diacylglycerol cysteine.

This sequence belongs to the FlgH family. In terms of assembly, the basal body constitutes a major portion of the flagellar organelle and consists of four rings (L,P,S, and M) mounted on a central rod.

It localises to the cell outer membrane. It is found in the bacterial flagellum basal body. Functionally, assembles around the rod to form the L-ring and probably protects the motor/basal body from shearing forces during rotation. The chain is Flagellar L-ring protein from Campylobacter jejuni subsp. doylei (strain ATCC BAA-1458 / RM4099 / 269.97).